The following is a 124-amino-acid chain: uncharacterized protein (124 aa).

Residues 42 to 118 (DKGGIFMFYN…INTQHSKYNI (77 aa)) enclose the GIY-YIG domain.

This is an uncharacterized protein from Bacillus subtilis (strain 168).